Reading from the N-terminus, the 194-residue chain is A-type ATP synthase subunit E (194 aa).

It belongs to the V-ATPase E subunit family. Has multiple subunits with at least A(3), B(3), C, D, E, F, H, I and proteolipid K(x).

Its subcellular location is the cell membrane. In terms of biological role, component of the A-type ATP synthase that produces ATP from ADP in the presence of a proton gradient across the membrane. The sequence is that of A-type ATP synthase subunit E from Saccharolobus solfataricus (strain ATCC 35092 / DSM 1617 / JCM 11322 / P2) (Sulfolobus solfataricus).